The chain runs to 375 residues: Alcohol dehydrogenase 1 (375 aa).

N-acetylserine is present on serine 1. Zn(2+) is bound by residues cysteine 46, histidine 67, cysteine 97, cysteine 100, cysteine 103, cysteine 111, and cysteine 174. NAD(+)-binding positions include 199 to 204, aspartate 223, lysine 228, 293 to 295, and arginine 370; these read GLGGVG and VGV.

This sequence belongs to the zinc-containing alcohol dehydrogenase family. Class-I subfamily. As to quaternary structure, homodimer. Zn(2+) serves as cofactor.

The protein localises to the cytoplasm. It catalyses the reaction a primary alcohol + NAD(+) = an aldehyde + NADH + H(+). The enzyme catalyses a secondary alcohol + NAD(+) = a ketone + NADH + H(+). The polypeptide is Alcohol dehydrogenase 1 (Naja naja (Indian cobra)).